The chain runs to 440 residues: Trigger factor (440 aa).

The PPIase FKBP-type domain maps to 163-248; the sequence is GEIVSVTFEA…VHVIKERTLP (86 aa).

This sequence belongs to the FKBP-type PPIase family. Tig subfamily.

It is found in the cytoplasm. It catalyses the reaction [protein]-peptidylproline (omega=180) = [protein]-peptidylproline (omega=0). Involved in protein export. Acts as a chaperone by maintaining the newly synthesized protein in an open conformation. Functions as a peptidyl-prolyl cis-trans isomerase. This chain is Trigger factor, found in Solidesulfovibrio magneticus (strain ATCC 700980 / DSM 13731 / RS-1) (Desulfovibrio magneticus).